Here is an 870-residue protein sequence, read N- to C-terminus: Protein RRP6-like 2 (870 aa).

The 3'-5' exonuclease domain maps to 263–428 (VQEVKDLKEL…YIYDLIKLEL (166 aa)). Residues 479 to 559 (NAAQLAIVAG…RQSMQHYAAF (81 aa)) enclose the HRDC domain. 4 disordered regions span residues 583 to 605 (SEKK…SSQL), 649 to 668 (GALL…EKVK), 688 to 775 (TEKV…EDEP), and 821 to 870 (FGEG…SFKN). 2 stretches are compositionally biased toward basic and acidic residues: residues 720–729 (SKEDGVKELK) and 821–834 (FGEG…KREA). The span at 840–849 (KGSTQEQSEF) shows a compositional bias: polar residues.

It localises to the nucleus. The protein resides in the nucleolus. Its subcellular location is the cytoplasm. In terms of biological role, acts as an important epigenetic regulator through multiple silencing mechanisms. Involved in association with RRP6L1 in the silencing of the solo LTR locus. Controls levels of non-coding RNAs (ncRNAs) from the solo LTR locus. Seems to function independently of the RNA-mediated gene silencing (RdDM) pathway. Functions redundantly with RRP6L1 in the regulation of FLC locus. Participates in the maintenance of trimethylated 'Lys-27' (H3K27me3) at FLC locus via the regulation of antisense long non-coding RNAs (lncRNAs) and the regulation of diverse antisense RNAs derived from the FLC locus. Seems not involved in the exosomal RNA degradation. May be involved in poly(A)-mediated RNA degradation. This Arabidopsis thaliana (Mouse-ear cress) protein is Protein RRP6-like 2.